The sequence spans 696 residues: Neurogenic protein big brain (696 aa).

The Cytoplasmic segment spans residues 1–71 (MADESLHTVP…LEFWRSIISE (71 aa)). Phosphoserine is present on Ser46. The residue at position 47 (Thr47) is a Phosphothreonine. The chain crosses the membrane as a helical span at residues 72–93 (CLASFMYVFIVCGAAAGVGVGA). Residues 94 to 97 (SVSS) lie on the Extracellular side of the membrane. A helical transmembrane segment spans residues 98 to 118 (VLLATALASGLAMATLTQCFL). Over 119–143 (HISGAHINPAVTLALCVVRSISPIR) the chain is Cytoplasmic. Positions 126 to 128 (NPA) match the NPA 1 motif. A helical membrane pass occupies residues 144-167 (AAMYITAQCGGGIAGAALLYGVTV). At 168 to 189 (PGYQGNLQAAISHSAALAAWER) the chain is on the extracellular side. Residues 190-208 (FGVEFILTFLVVLCYFVST) form a helical membrane-spanning segment. At 209 to 213 (DPMKK) the chain is on the cytoplasmic side. Residues 214–234 (FMGNSAASIGCAYSACCFVSM) traverse the membrane as a helical segment. The Extracellular segment spans residues 235–256 (PYLNPARSLGPSFVLNKWDSHW). Positions 238-240 (NPA) match the NPA 2 motif. A helical membrane pass occupies residues 257–273 (VYWFGPLVGGMASGLVY). At Tyr273 the chain carries Phosphotyrosine; by Src. Residues 274-696 (EYIFNSRNRN…HYGMLPLRPN (423 aa)) are Cytoplasmic-facing. At Ser300 the chain carries Phosphoserine. The segment at 314–345 (NKYQQSQGTYPRGQSNGNGGGQAAGNGQHQAA) is disordered. Phosphotyrosine; by Abl is present on Tyr367. The residue at position 384 (Tyr384) is a Phosphotyrosine; by Src. Residue Ser394 is modified to Phosphoserine. Disordered regions lie at residues 436-634 (MRTQ…KVSA) and 650-696 (TSQG…LRPN). 2 stretches are compositionally biased toward low complexity: residues 439 to 451 (QQQQQQQQQQQQQ) and 462 to 472 (QNQNVQNQMQQ). Tyr478 is modified (phosphotyrosine; by Src). Residues 487-532 (QQQPIQQQQQQQQQQQLQQQQPNMGVQQQQMQPPPQMMSDPQQQPQ) show a composition bias toward low complexity. The segment covering 549–558 (GNHKYDRRDP) has biased composition (basic and acidic residues). Ser576 carries the post-translational modification Phosphoserine. Low complexity predominate over residues 576-587 (SDDSSYGSYHGS). Residues 599-616 (EPSPPPPPMLMYAPPPQP) are compositionally biased toward pro residues. Tyr610 bears the Phosphotyrosine; by Abl mark. Positions 659–686 (QQQQQQQQQQQQQQQQQQQQMMMQQQQQ) are enriched in low complexity.

It belongs to the MIP/aquaporin (TC 1.A.8) family. Post-translationally, phosphorylated at its C-terminus. In terms of tissue distribution, detected in all tissues with neurogenic abilities, for example the neurogenic ectoderm.

It is found in the membrane. Essential for proper differentiation of ectoderm. Acts synergistically with neurogenic locus proteins Notch and Delta during the separation of neural and epidermal cell lineages in response to the lateral inhibition signal. Voltage-insensitive monovalent cation channel. Ion transport is blocked by the presence of divalent cations. The chain is Neurogenic protein big brain (bib) from Drosophila melanogaster (Fruit fly).